Here is a 148-residue protein sequence, read N- to C-terminus: Ribonuclease 4 (148 aa).

A signal peptide spans 1 to 29 (MMDLQRTQSLLLLLVLTLLGLGLVQPSYG). A Pyrrolidone carboxylic acid modification is found at Q30. DUMP is bound by residues R36, H41, K69, N72, and T73. Catalysis depends on H41, which acts as the Proton acceptor. Intrachain disulfides connect C54-C110, C68-C121, C86-C136, and C93-C100. The Proton donor role is filled by H145. Residue F146 coordinates dUMP.

This sequence belongs to the pancreatic ribonuclease family. As to expression, expressed in the cortical tubules of the kidney (at protein level). Also expressed in the medullary tubules of the kidney.

It localises to the secreted. Its function is as follows. Cleaves preferentially after uridine bases. Has antimicrobial activity against uropathogenic E.coli (UPEC). Probably contributes to urinary tract sterility. The polypeptide is Ribonuclease 4 (Rnase4) (Mus musculus (Mouse)).